The primary structure comprises 722 residues: Polyribonucleotide nucleotidyltransferase (722 aa).

Asp-495 and Asp-501 together coordinate Mg(2+). Residues 561-620 (PRLYVMKINPEKIREVIGKGGETIRSITKDTGCEINIEEDGTITIASVSSEGAEAAKKRI) enclose the KH domain. Residues 630–700 (GKVYEGTVVK…DRGRIRLSIK (71 aa)) form the S1 motif domain.

Belongs to the polyribonucleotide nucleotidyltransferase family. The cofactor is Mg(2+).

It is found in the cytoplasm. It carries out the reaction RNA(n+1) + phosphate = RNA(n) + a ribonucleoside 5'-diphosphate. Involved in mRNA degradation. Catalyzes the phosphorolysis of single-stranded polyribonucleotides processively in the 3'- to 5'-direction. In Chromobacterium violaceum (strain ATCC 12472 / DSM 30191 / JCM 1249 / CCUG 213 / NBRC 12614 / NCIMB 9131 / NCTC 9757 / MK), this protein is Polyribonucleotide nucleotidyltransferase.